The chain runs to 356 residues: DNA polymerase IV (356 aa).

Positions 6–187 (IIHVDMDYFF…LDIGDFPGVG (182 aa)) constitute a UmuC domain. Mg(2+) is bound by residues D10 and D105. Residue E106 is part of the active site.

The protein belongs to the DNA polymerase type-Y family. Monomer. Requires Mg(2+) as cofactor.

It is found in the cytoplasm. The catalysed reaction is DNA(n) + a 2'-deoxyribonucleoside 5'-triphosphate = DNA(n+1) + diphosphate. Functionally, poorly processive, error-prone DNA polymerase involved in untargeted mutagenesis. Copies undamaged DNA at stalled replication forks, which arise in vivo from mismatched or misaligned primer ends. These misaligned primers can be extended by PolIV. Exhibits no 3'-5' exonuclease (proofreading) activity. May be involved in translesional synthesis, in conjunction with the beta clamp from PolIII. In Staphylococcus saprophyticus subsp. saprophyticus (strain ATCC 15305 / DSM 20229 / NCIMB 8711 / NCTC 7292 / S-41), this protein is DNA polymerase IV.